The following is a 678-amino-acid chain: NADPH--cytochrome P450 reductase (678 aa).

Gly2 is subject to N-acetylglycine. At 2-22 (GDSHEDTSATVPEAVAEEVSL) the chain is on the lumenal side. A helical transmembrane segment spans residues 23–43 (FSTTDIVLFSLIVGVLTYWFI). Residues 44-678 (FKKKKEEIPE…KGRYSLDVWS (635 aa)) lie on the Cytoplasmic side of the membrane. One can recognise a Flavodoxin-like domain in the interval 80 to 224 (IIVFYGSQTG…DFITWREQFW (145 aa)). Residues 86–91 (SQTGTA), 138–141 (ATYG), 173–182 (LGNKTYEHFN), and Asp208 each bind FMN. The 243-residue stretch at 279-521 (KNPFLAAVTT…FVRKSQFRLP (243 aa)) folds into the FAD-binding FR-type domain. Residue Arg298 participates in NADP(+) binding. FAD-binding positions include Arg424, 454–457 (RYYS), 472–474 (CAV), Tyr478, and 488–491 (GVAT). NADP(+) is bound by residues Thr535, 596–597 (SR), 602–606 (KVYVQ), and Asp639. FAD is bound at residue Trp677.

It belongs to the NADPH--cytochrome P450 reductase family. The protein in the N-terminal section; belongs to the flavodoxin family. This sequence in the C-terminal section; belongs to the flavoprotein pyridine nucleotide cytochrome reductase family. FAD serves as cofactor. Requires FMN as cofactor.

The protein resides in the endoplasmic reticulum membrane. It carries out the reaction 2 oxidized [cytochrome P450] + NADPH = 2 reduced [cytochrome P450] + NADP(+) + H(+). Functionally, this enzyme is required for electron transfer from NADP to cytochrome P450 in microsomes. It can also provide electron transfer to heme oxygenase and cytochrome B5. The polypeptide is NADPH--cytochrome P450 reductase (Mus musculus (Mouse)).